The chain runs to 199 residues: N-(5'-phosphoribosyl)anthranilate isomerase (199 aa).

It belongs to the TrpF family.

The enzyme catalyses N-(5-phospho-beta-D-ribosyl)anthranilate = 1-(2-carboxyphenylamino)-1-deoxy-D-ribulose 5-phosphate. It participates in amino-acid biosynthesis; L-tryptophan biosynthesis; L-tryptophan from chorismate: step 3/5. The polypeptide is N-(5'-phosphoribosyl)anthranilate isomerase (Streptococcus pneumoniae serotype 19F (strain G54)).